The primary structure comprises 823 residues: Probable inorganic carbon transporter subunit DabA (823 aa).

Residues cysteine 361, aspartate 363, histidine 527, and cysteine 542 each contribute to the Zn(2+) site.

This sequence belongs to the inorganic carbon transporter (TC 9.A.2) DabA family. In terms of assembly, forms a complex with DabB. The cofactor is Zn(2+).

The protein localises to the cell inner membrane. Its activity is regulated as follows. Intracellular DIC accumulation is sensitive to CCCP (carbonyl cyanide-m-chlorophenylhydrazone) and DCCD (N,N-dicyclohexylcarbodiimide) and therefore likely driven by either proton potential, ATP, or both. Functionally, part of an energy-coupled inorganic carbon pump. Probably involved in transport of dissolved inorganic carbon (DIC) with upstream gene dabB (Tcr_0853); has been suggested to be a proton-DIC symporter. This is Probable inorganic carbon transporter subunit DabA from Hydrogenovibrio crunogenus (strain DSM 25203 / XCL-2) (Thiomicrospira crunogena).